The primary structure comprises 85 residues: Beta-toxin Ct6 (85 aa).

The signal sequence occupies residues 1–18 (MKTFVLALCLVLIGMVYA). The 66-residue stretch at 19 to 84 (KDGYLVSKHT…VYPLPNKSCG (66 aa)) folds into the LCN-type CS-alpha/beta domain. 4 disulfide bridges follow: Cys-30–Cys-83, Cys-34–Cys-59, Cys-43–Cys-64, and Cys-47–Cys-66. Cys-83 carries the post-translational modification Cysteine amide.

The protein belongs to the long (4 C-C) scorpion toxin superfamily. Sodium channel inhibitor family. Beta subfamily. As to expression, expressed by the venom gland.

It localises to the secreted. Its function is as follows. Beta toxins bind voltage-independently at site-4 of sodium channels (Nav) and shift the voltage of activation toward more negative potentials thereby affecting sodium channel activation and promoting spontaneous and repetitive firing. The chain is Beta-toxin Ct6 from Centruroides tecomanus (Scorpion).